The chain runs to 191 residues: MTSATPQPGQLIVITGPSGVGKGTLLRQLRQRHPELALSVSATTRPPRPTEVAGVDYYFVSVEEFKAMIAAGQLLEWAEFAGHYYGTPRQPLVQLIAQGKTVILEIELQGARQVRQSYPQARHIFILPPSLAELEHRLRSRGQDSEEAIARRLAQAETEIAAAPEFDVQIVNDDLEKSLIALETAIFSPAP.

The Guanylate kinase-like domain maps to G9 to F187. Residue G16–G23 participates in ATP binding.

This sequence belongs to the guanylate kinase family.

The protein localises to the cytoplasm. The enzyme catalyses GMP + ATP = GDP + ADP. In terms of biological role, essential for recycling GMP and indirectly, cGMP. The sequence is that of Guanylate kinase from Thermosynechococcus vestitus (strain NIES-2133 / IAM M-273 / BP-1).